Here is a 341-residue protein sequence, read N- to C-terminus: S-adenosylmethionine:tRNA ribosyltransferase-isomerase (341 aa).

Belongs to the QueA family. In terms of assembly, monomer.

Its subcellular location is the cytoplasm. The catalysed reaction is 7-aminomethyl-7-carbaguanosine(34) in tRNA + S-adenosyl-L-methionine = epoxyqueuosine(34) in tRNA + adenine + L-methionine + 2 H(+). Its pathway is tRNA modification; tRNA-queuosine biosynthesis. Its function is as follows. Transfers and isomerizes the ribose moiety from AdoMet to the 7-aminomethyl group of 7-deazaguanine (preQ1-tRNA) to give epoxyqueuosine (oQ-tRNA). The polypeptide is S-adenosylmethionine:tRNA ribosyltransferase-isomerase (Staphylococcus epidermidis (strain ATCC 12228 / FDA PCI 1200)).